The following is a 340-amino-acid chain: Deubiquitinase SseL (340 aa).

His-223 is an active-site residue. Cys-285 functions as the Nucleophile in the catalytic mechanism.

Belongs to the peptidase C79 family.

The protein resides in the secreted. It localises to the host cytoplasm. In terms of biological role, effector proteins function to alter host cell physiology and promote bacterial survival in host tissues. This protease targets the host cell ubiquitin pathway by acting as a deubiquitinase in infected host cells. In Salmonella paratyphi B (strain ATCC BAA-1250 / SPB7), this protein is Deubiquitinase SseL (sseL).